Consider the following 359-residue polypeptide: Insulin gene enhancer protein ISL-2 (359 aa).

2 consecutive LIM zinc-binding domains span residues 25 to 86 (AMCV…RLFG) and 87 to 149 (IKCA…LLER). Positions 151-191 (AAGSPRSPGPLPGARGLHLPDAGSGRQPALRPHVHKQTEKT) are disordered. Residues Ser-154 and Ser-157 each carry the phosphoserine modification. Positions 191 to 250 (TTRVRTVLNEKQLHTLRTCYAANPRPDALMKEQLVEMTGLSPRVIRVWFQNKRCKDKKKS) form a DNA-binding region, homeobox. Residues 272 to 301 (GTPLVAGSPIRHENAVQGSAVEVQTYQPPW) form an LIM-binding domain (LID) region. Ser-279 is subject to Phosphoserine. The segment covering 326–336 (ESGSLGNSSGS) has biased composition (low complexity). The disordered stretch occupies residues 326–359 (ESGSLGNSSGSDVTSLSSQLPDTPNSMVPSPVET). Residues 337–359 (DVTSLSSQLPDTPNSMVPSPVET) are compositionally biased toward polar residues.

Interacts with LHX4.

It localises to the nucleus. In terms of biological role, transcriptional factor that defines subclasses of motoneurons that segregate into columns in the spinal cord and select distinct axon pathways. The protein is Insulin gene enhancer protein ISL-2 (ISL2) of Homo sapiens (Human).